The primary structure comprises 486 residues: Vacuolar-processing enzyme beta-isozyme (486 aa).

Residues Met1–Ala21 form the signal peptide. His169 is an active-site residue. The active-site Nucleophile is Cys211. Cys244 and Cys258 are joined by a disulfide. A glycan (N-linked (GlcNAc...) asparagine) is linked at Asn309. 2 disulfides stabilise this stretch: Cys420-Cys450 and Cys432-Cys467.

It belongs to the peptidase C13 family. Post-translationally, auto-catalytic activation. As to expression, seed specific. Also expressed in the flowers and buds.

It localises to the vacuole. The protein resides in the protein storage vacuole. It catalyses the reaction Hydrolysis of proteins and small molecule substrates at -Asn-|-Xaa- bonds.. Functionally, asparagine-specific endopeptidase involved in the processing of vacuolar seed protein precursors into the mature forms. Probably involved in post-translational proteolysis of seed storage proteins in the protein storage vacuole of developing seeds. This is Vacuolar-processing enzyme beta-isozyme from Arabidopsis thaliana (Mouse-ear cress).